The chain runs to 616 residues: UDP-sugar pyrophosphorylase (616 aa).

This sequence belongs to the USP family. Mg(2+) serves as cofactor. Mn(2+) is required as a cofactor.

It carries out the reaction a monosaccharide 1-phosphate + UTP + H(+) = a UDP-monosaccharide + diphosphate. Functionally, may function as the terminal enzyme of the myo-inositol oxidation (MIO) pathway. May also play a role in the salvage pathway for synthesis of nucleotide sugars. In Oryza sativa subsp. indica (Rice), this protein is UDP-sugar pyrophosphorylase (USP).